The primary structure comprises 238 residues: uncharacterized protein (238 aa).

This is an uncharacterized protein from Escherichia coli (strain K12).